A 261-amino-acid polypeptide reads, in one-letter code: DNA repair protein RecO (261 aa).

The protein belongs to the RecO family.

Functionally, involved in DNA repair and RecF pathway recombination. This Pelodictyon phaeoclathratiforme (strain DSM 5477 / BU-1) protein is DNA repair protein RecO.